The sequence spans 198 residues: Probable chemoreceptor glutamine deamidase CheD (198 aa).

This sequence belongs to the CheD family.

The enzyme catalyses L-glutaminyl-[protein] + H2O = L-glutamyl-[protein] + NH4(+). Its function is as follows. Probably deamidates glutamine residues to glutamate on methyl-accepting chemotaxis receptors (MCPs), playing an important role in chemotaxis. The polypeptide is Probable chemoreceptor glutamine deamidase CheD (Xanthomonas axonopodis pv. citri (strain 306)).